The following is a 141-amino-acid chain: Nucleoside diphosphate kinase (141 aa).

Lys-11, Phe-59, Arg-87, Thr-93, Arg-104, and Asn-114 together coordinate ATP. Catalysis depends on His-117, which acts as the Pros-phosphohistidine intermediate.

This sequence belongs to the NDK family. As to quaternary structure, homotetramer. Mg(2+) is required as a cofactor.

The protein localises to the cytoplasm. It catalyses the reaction a 2'-deoxyribonucleoside 5'-diphosphate + ATP = a 2'-deoxyribonucleoside 5'-triphosphate + ADP. The enzyme catalyses a ribonucleoside 5'-diphosphate + ATP = a ribonucleoside 5'-triphosphate + ADP. Major role in the synthesis of nucleoside triphosphates other than ATP. The ATP gamma phosphate is transferred to the NDP beta phosphate via a ping-pong mechanism, using a phosphorylated active-site intermediate. The chain is Nucleoside diphosphate kinase from Paraburkholderia phymatum (strain DSM 17167 / CIP 108236 / LMG 21445 / STM815) (Burkholderia phymatum).